Consider the following 234-residue polypeptide: Peptidase E (234 aa).

Active-site charge relay system residues include Ser123, Asp138, and His160.

This sequence belongs to the peptidase S51 family.

The protein localises to the cytoplasm. It carries out the reaction Dipeptidase E catalyzes the hydrolysis of dipeptides Asp-|-Xaa. It does not act on peptides with N-terminal Glu, Asn or Gln, nor does it cleave isoaspartyl peptides.. Its function is as follows. Hydrolyzes dipeptides containing N-terminal aspartate residues. May play a role in allowing the cell to use peptide aspartate to spare carbon otherwise required for the synthesis of the aspartate family of amino acids. This is Peptidase E from Haemophilus influenzae (strain PittGG).